A 1284-amino-acid polypeptide reads, in one-letter code: MLPYNSNYLSDNGKRKFSDENPQSEVYGSSQTGLPSSYGNPQSYGTPPVQQSSAMYGVNNSMGGGMYNTSENTQFMNTDYSQTSSYASTPMSNAYSRDAPAAINNNFGYSYVGQSSQPVPSYNPLPSYNTASLPNAGIPAAMPGMPSGYPGTVPIPQGGYNAHYSSPYNNGYPIGAVNPTSAIPAQPPAQPVNNVLPSYVRSNSRSSARSTARSAPRSTQRSRSSSANPVTTPPVNNTLLTPPAPPVELPPVTTTSPNAIIRSVQWIRSFVPQAPIHQVINTLAQTKWDETAALSILSQKYLSCDLGIPIQEHKRFKQSPVASNMPTYGSSNRTVQSQKRSIRDKYIQMPNDSTQASLMPSYTRKTSNASKKLTTEEDEFYDSEEEPEAIVHRDTSALERTVLNFINSSTAKELSDTASCPLSHSKLLLEHRPFQTLAEACIIKHPDDVPSKPGRRGRRREKNPMGQKIVNACMETMEGYYAIDNLIAKCEFLGNRISKGMASWGIKLEMSNGELNIVDMESVPTEAADNSDFPKFVTEQPKTLASDVQLKSYQLVGVNWLHLLYQQKLSGILADEMGLGKTCQVVAFFALLLEQGHHGPHLVVVPSSTLENWLRELARFCPSLRVEPYYGSQQERANIREAIEENEIKYDILVTTYQLATNNKEDRSFLKHQNFDVCVYDEGHYLKNRMSERYKHLMNLNANFRLLLTGTPLQNNLKELVSLLAFILPNMFDSDMDDLDVIFKAKPTADADIEQALLSKQRISRAKTMMTPFVLRRRKNQVLNDLPKKTQIIEHCKLSENQLEIYNRYAALQKNQQLRRDDKRNKRSKNDEESDGKSLSAGHVLMQLRKAANHALLFRKFYDDEKLKQMAKDIMQEEQYKNANEQYIYEDMEVMSDFELHRLCRSFPTLQSYTLKDDPWMDSGKIRVLKELLPKMKEEGSRILLFSQFTQMLDILEQVLDTLKISYVRLDGSTQVEVRQDIIDQFHKEEDVTVFLLSTKAGGFGINLACANVVILYDCSYNPFDDLQAEDRAHRVGQVREVTVIRLITDNTIEEYIQKLANTKLALDMSLSSDGKDREEIGERLVQDMLDEENNGNNTKPEITGNESDGEFKVSSSNNSKQTDAEETNTGVPLEGSQPNSVEKTDLADGDEKANIKTEMKSETVEGDNKELRETMKGENVQTDSNAAVPSSKSSTEEPNESVLSGHLDLDTEASPVVSTIEKTTKGDVSVTEEQQSANIDGQLEKPEIEESKKPDVLNQVSLSIEEEKPKNKESEVDNNAAKD.

Polar residues-rich tracts occupy residues 1–10 (MLPYNSNYLS) and 20–57 (ENPQSEVYGSSQTGLPSSYGNPQSYGTPPVQQSSAMYG). 5 disordered regions span residues 1–57 (MLPY…AMYG), 185–252 (AQPP…LPPV), 317–339 (KQSPVASNMPTYGSSNRTVQSQK), 353–388 (STQASLMPSYTRKTSNASKKLTTEEDEFYDSEEEPE), and 446–465 (PDDVPSKPGRRGRRREKNPM). Over residues 201–241 (RSNSRSSARSTARSAPRSTQRSRSSSANPVTTPPVNNTLLT) the composition is skewed to low complexity. Polar residues-rich tracts occupy residues 320–339 (PVASNMPTYGSSNRTVQSQK) and 353–372 (STQASLMPSYTRKTSNASKK). At S323 the chain carries Phosphoserine. The segment covering 376–388 (EEDEFYDSEEEPE) has biased composition (acidic residues). S383 is modified (phosphoserine). Residues 562 to 730 (HLLYQQKLSG…VSLLAFILPN (169 aa)) form the Helicase ATP-binding domain. Position 575 to 582 (575 to 582 (DEMGLGKT)) interacts with ATP. The DEGH box signature appears at 681–684 (DEGH). Positions 816 to 839 (QQLRRDDKRNKRSKNDEESDGKSL) are disordered. Basic and acidic residues predominate over residues 818–831 (LRRDDKRNKRSKND). In terms of domain architecture, Helicase C-terminal spans 928-1079 (VLKELLPKMK…SLSSDGKDRE (152 aa)). The segment at 1088-1284 (DMLDEENNGN…SEVDNNAAKD (197 aa)) is disordered. Residues 1095 to 1107 (NGNNTKPEITGNE) are compositionally biased toward polar residues. Basic and acidic residues predominate over residues 1143-1177 (EKTDLADGDEKANIKTEMKSETVEGDNKELRETMK). The segment covering 1180–1194 (NVQTDSNAAVPSSKS) has biased composition (polar residues). Basic and acidic residues-rich tracts occupy residues 1243 to 1256 (QLEKPEIEESKKPD) and 1266 to 1284 (EEEKPKNKESEVDNNAAKD).

This sequence belongs to the SNF2/RAD54 helicase family.

The protein localises to the cytoplasm. Its subcellular location is the nucleus. The catalysed reaction is ATP + H2O = ADP + phosphate + H(+). In terms of biological role, DNA helicase that possesses intrinsic ATP-dependent nucleosome-remodeling activity and is required for heterochromatin organization. This is ATP-dependent helicase fft2 (fft2) from Schizosaccharomyces pombe (strain 972 / ATCC 24843) (Fission yeast).